We begin with the raw amino-acid sequence, 172 residues long: Lipoprotein signal peptidase (172 aa).

Helical transmembrane passes span 10–30 (LIWL…KAWV), 68–88 (WQLW…AFWL), and 98–118 (SALP…DRLM). Residues Asp124 and Asp142 contribute to the active site. Residues 138–158 (FNIADSAIVGGAIGIAVFGLF) traverse the membrane as a helical segment.

Belongs to the peptidase A8 family.

It localises to the cell inner membrane. It carries out the reaction Release of signal peptides from bacterial membrane prolipoproteins. Hydrolyzes -Xaa-Yaa-Zaa-|-(S,diacylglyceryl)Cys-, in which Xaa is hydrophobic (preferably Leu), and Yaa (Ala or Ser) and Zaa (Gly or Ala) have small, neutral side chains.. It functions in the pathway protein modification; lipoprotein biosynthesis (signal peptide cleavage). In terms of biological role, this protein specifically catalyzes the removal of signal peptides from prolipoproteins. The chain is Lipoprotein signal peptidase from Xanthomonas euvesicatoria pv. vesicatoria (strain 85-10) (Xanthomonas campestris pv. vesicatoria).